The primary structure comprises 293 residues: Cytidine deaminase 8 (293 aa).

CMP/dCMP-type deaminase domains are found at residues 20-151 (FTPQ…LISQ) and 181-293 (EHCN…LHCK). A substrate-binding site is contributed by 61–63 (NVE). Histidine 74 serves as a coordination point for Zn(2+). Glutamate 76 functions as the Proton donor in the catalytic mechanism. Zn(2+) contacts are provided by cysteine 107 and cysteine 110.

It belongs to the cytidine and deoxycytidylate deaminase family. In terms of assembly, homodimer. It depends on Zn(2+) as a cofactor.

The catalysed reaction is cytidine + H2O + H(+) = uridine + NH4(+). It carries out the reaction 2'-deoxycytidine + H2O + H(+) = 2'-deoxyuridine + NH4(+). This enzyme scavenges exogenous and endogenous cytidine and 2'-deoxycytidine for UMP synthesis. This Arabidopsis thaliana (Mouse-ear cress) protein is Cytidine deaminase 8 (CDA8).